The primary structure comprises 562 residues: Ikaros family zinc finger protein (562 aa).

3 C2H2-type zinc fingers span residues 45 to 67 (IKCE…IRSH), 73 to 95 (FKCH…YKIH), and 101 to 123 (FQCP…MRIH). The C2H2-type 4; degenerate zinc-finger motif lies at 129 to 152 (YRCSYCARSYKSRQSMKEHEYQCP). Disordered stretches follow at residues 178-210 (NPLA…PPYP), 293-342 (QNQQ…VKPT), 361-404 (QLED…KEDD), and 451-473 (DESK…STQD). Positions 307 to 326 (PSLSEATPSSHSSHSSAEDS) are enriched in low complexity. Positions 327-336 (GQVNKFSPTE) are enriched in polar residues. Over residues 369 to 383 (DSRKRPHSFESEPTP) the composition is skewed to basic and acidic residues. Polar residues predominate over residues 456 to 471 (EISSVDSRSPLDQSST). 2 consecutive C2H2-type zinc fingers follow at residues 494–516 (WECK…MGVH) and 522–546 (LVCN…HHQH).

It belongs to the Ikaros C2H2-type zinc-finger protein family. In terms of tissue distribution, expression is strongest in the anterior Fol cells of the oikoplastic epithelium.

Its subcellular location is the nucleus. This Oikopleura dioica (Tunicate) protein is Ikaros family zinc finger protein.